Reading from the N-terminus, the 42-residue chain is Protein YkgS (42 aa).

This Escherichia coli (strain K12) protein is Protein YkgS (ykgS).